The sequence spans 459 residues: Sorting nexin-8 (459 aa).

The tract at residues methionine 1–glutamine 37 is disordered. The region spanning alanine 68 to aspartate 176 is the PX domain. A 1,2-diacyl-sn-glycero-3-phospho-(1D-myo-inositol-3-phosphate) contacts are provided by arginine 104, lysine 130, and arginine 143. At threonine 446 the chain carries Phosphothreonine. Residue serine 450 is modified to Phosphoserine.

It belongs to the sorting nexin family.

The protein localises to the early endosome membrane. In terms of biological role, may be involved in several stages of intracellular trafficking. May play a role in intracellular protein transport from early endosomes to the trans-Golgi network. The sequence is that of Sorting nexin-8 (Snx8) from Mus musculus (Mouse).